Consider the following 1192-residue polypeptide: Probable inactive serine/threonine-protein kinase DDB_G0280131 (1192 aa).

5 disordered regions span residues serine 23 to glutamate 90, aspartate 144 to aspartate 189, valine 201 to alanine 236, serine 301 to serine 406, and aspartate 478 to lysine 499. Residues asparagine 26–asparagine 43 are compositionally biased toward low complexity. A compositionally biased stretch (polar residues) spans serine 44–asparagine 60. Composition is skewed to low complexity over residues serine 61–alanine 73 and serine 154–asparagine 175. Over residues valine 201–threonine 232 the composition is skewed to pro residues. The segment covering serine 301 to asparagine 324 has biased composition (low complexity). The span at lysine 325–threonine 338 shows a compositional bias: polar residues. Positions proline 362–glutamine 376 are enriched in low complexity. The span at proline 377–proline 391 shows a compositional bias: pro residues. Composition is skewed to low complexity over residues threonine 392–threonine 402 and asparagine 485–asparagine 498. In terms of domain architecture, Protein kinase spans alanine 521–histidine 783. ATP is bound by residues isoleucine 527–threonine 535 and lysine 549. The segment at lysine 790–valine 831 is disordered. Low complexity predominate over residues proline 791 to glutamine 828.

Belongs to the protein kinase superfamily. TKL Ser/Thr protein kinase family.

The protein is Probable inactive serine/threonine-protein kinase DDB_G0280131 of Dictyostelium discoideum (Social amoeba).